Consider the following 353-residue polypeptide: UPF0283 membrane protein YcjF (353 aa).

Basic and acidic residues predominate over residues 1 to 19; it reads MSEPLKPRIDFAEPLKEEP. A disordered region spans residues 1–35; it reads MSEPLKPRIDFAEPLKEEPTSAFKAQQTFSEAESR. A run of 3 helical transmembrane segments spans residues 70–90, 100–120, and 213–233; these read MVMGGLALFGASVVGQGLQWT, VALGGCAAGALIIGAGVGSVV, and ESTLMIAVSPLALVDMAFIAW.

Belongs to the UPF0283 family.

The protein localises to the cell inner membrane. In Salmonella choleraesuis (strain SC-B67), this protein is UPF0283 membrane protein YcjF.